We begin with the raw amino-acid sequence, 2635 residues long: Large tegument protein deneddylase (2635 aa).

Positions 1 to 233 (MAAQPLYMEG…LHGPRMDISR (233 aa)) are deubiquitination activity. The region spanning 9 to 223 (EGMASTHQAN…NHYRTIVFEE (215 aa)) is the Peptidase C76 domain. Active-site residues include C29, D159, and H161. 4 disordered regions span residues 243–497 (ITSP…DRYA), 2238–2269 (PLTITPNKPTGTPHVSPEADPITERKRGQQPK), 2357–2438 (RTAL…KRAA), and 2500–2533 (KAGWDTAPDIPLPHSSPESSPPTSPQPIRVDDKS). Residues 245 to 255 (SPSVSPAPSEA) show a composition bias toward low complexity. 2 stretches are compositionally biased toward basic and acidic residues: residues 256–270 (PLRRDSTQSQDETRP) and 282–295 (PTDRPRPPHQDRPP). Positions 316-325 (KTGRGGNEGR) are interaction with inner tegument protein. Positions 330–346 (PPDEHQPPHITAEHMDQ) are enriched in basic and acidic residues. Positions 448–461 (DDPLTPLYPLTDTP) are enriched in low complexity. Over residues 2379–2402 (TLTFRLPPTAPTPATAALETKTTP) the composition is skewed to low complexity. Over residues 2425–2437 (HARDTSPPAEKRA) the composition is skewed to basic and acidic residues.

Belongs to the herpesviridae large tegument protein family. As to quaternary structure, interacts with host CUL1 and CUL4A; these interactions inhibit the E3 ligase activity of cullins. Interacts with inner tegument protein. Interacts with capsid vertex specific component CVC2. Interacts with the major capsid protein/MCP.

It is found in the virion tegument. The protein localises to the host cytoplasm. It localises to the host nucleus. The catalysed reaction is Thiol-dependent hydrolysis of ester, thioester, amide, peptide and isopeptide bonds formed by the C-terminal Gly of ubiquitin (a 76-residue protein attached to proteins as an intracellular targeting signal).. Large tegument protein that plays multiple roles in the viral cycle. During viral entry, remains associated with the capsid while most of the tegument is detached and participates in the capsid transport toward the host nucleus. Plays a role in the routing of the capsid at the nuclear pore complex and subsequent uncoating. Within the host nucleus, acts as a deneddylase and promotes the degradation of nuclear CRLs (cullin-RING ubiquitin ligases) and thereby stabilizes nuclear CRL substrates, while cytoplasmic CRLs remain unaffected. These modifications prevent host cell cycle S-phase progression and create a favorable environment allowing efficient viral genome replication. Participates later in the secondary envelopment of capsids. Indeed, plays a linker role for the association of the outer viral tegument to the capsids together with the inner tegument protein. The sequence is that of Large tegument protein deneddylase from Homo sapiens (Human).